Reading from the N-terminus, the 719-residue chain is Polyribonucleotide nucleotidyltransferase (719 aa).

Mg(2+) contacts are provided by D491 and D497. The KH domain maps to 558–617 (PRMLTIKINPEKIRDVIGKGGATIRALTEETGTQIDISDDGTIVIASVDEAQAKEAQRRI). The S1 motif domain maps to 627-695 (GQVYDGSVLR…DKGRLRLSVK (69 aa)).

This sequence belongs to the polyribonucleotide nucleotidyltransferase family. Mg(2+) serves as cofactor.

The protein localises to the cytoplasm. The enzyme catalyses RNA(n+1) + phosphate = RNA(n) + a ribonucleoside 5'-diphosphate. Involved in mRNA degradation. Catalyzes the phosphorolysis of single-stranded polyribonucleotides processively in the 3'- to 5'-direction. The polypeptide is Polyribonucleotide nucleotidyltransferase (Bordetella petrii (strain ATCC BAA-461 / DSM 12804 / CCUG 43448)).